The primary structure comprises 235 residues: Flagellar L-ring protein (235 aa).

Residues 1 to 18 (MNKIAGTLFLLAGLAMAG) form the signal peptide. A lipid anchor (N-palmitoyl cysteine) is attached at Cys19. Cys19 carries S-diacylglycerol cysteine lipidation.

This sequence belongs to the FlgH family. As to quaternary structure, the basal body constitutes a major portion of the flagellar organelle and consists of four rings (L,P,S, and M) mounted on a central rod.

It is found in the cell outer membrane. The protein resides in the bacterial flagellum basal body. In terms of biological role, assembles around the rod to form the L-ring and probably protects the motor/basal body from shearing forces during rotation. The polypeptide is Flagellar L-ring protein (Chelativorans sp. (strain BNC1)).